We begin with the raw amino-acid sequence, 89 residues long: Envelope protein US9 (89 aa).

Over residues 1–10 (MTSRPADQDS) the composition is skewed to basic and acidic residues. Residues 1–21 (MTSRPADQDSVRSSASVPLYP) form a disordered region. Residues 1 to 66 (MTSRPADQDS…RRRRTRCVGL (66 aa)) are Intravirion-facing. The short motif at 20–23 (YPAA) is the Internalization motif element. An acidic region spans residues 29-38 (EAYYSESEDE). A phosphoserine; by host CK2 mark is found at Ser33 and Ser35. A helical; Signal-anchor for type II membrane protein membrane pass occupies residues 67-87 (VIACLVVALLSGGFGALLVWL). Residues 88–89 (LR) lie on the Virion surface side of the membrane.

Belongs to the alphaherpesvirinae envelope protein US9 family. Phosphorylated on serines within the acidic cluster, possibly by host CK2. Phosphorylation determines whether endocytosed viral US9 traffics to the trans-Golgi network or recycles to the cell membrane.

It is found in the virion membrane. The protein localises to the host Golgi apparatus membrane. The protein resides in the host smooth endoplasmic reticulum membrane. Its subcellular location is the host cell membrane. Functionally, essential for the anterograde spread of the infection throughout the host nervous system. Together with the gE/gI heterodimer, US9 is involved in the sorting and transport of viral structural components toward axon tips. The protein is Envelope protein US9 of Homo sapiens (Human).